Reading from the N-terminus, the 159-residue chain is 3-hydroxyacyl-[acyl-carrier-protein] dehydratase FabZ (159 aa).

H58 is an active-site residue.

It belongs to the thioester dehydratase family. FabZ subfamily.

The protein localises to the cytoplasm. It carries out the reaction a (3R)-hydroxyacyl-[ACP] = a (2E)-enoyl-[ACP] + H2O. Its function is as follows. Involved in unsaturated fatty acids biosynthesis. Catalyzes the dehydration of short chain beta-hydroxyacyl-ACPs and long chain saturated and unsaturated beta-hydroxyacyl-ACPs. This is 3-hydroxyacyl-[acyl-carrier-protein] dehydratase FabZ from Helicobacter pylori (strain ATCC 700392 / 26695) (Campylobacter pylori).